The following is a 420-amino-acid chain: MTVSKLRPVIASRKSFPPWMIILGVLGVLAILGLIIGLLVHFLAVENKIYYYQGSFKVLNIPYDRNYERETSLESNYLSKILEIKMVDAFESSNIYKQYINSQIITLVPENNSVTAHIWLVFKDPWSNKENLRRRIESILHQMLENNSGSLTTDPGSLKLTEITKVDAEKIINNRCGRRPRMSATYDRITGGSTAQKGEWPWQASLRVNGKHHCGASLIGERFLLTAAHCFLRTNNPKNLTVSFGTRVTPAYMQHYVEEVIIHEDYVKGQHHDDVAIIKLTEKVSFRNDVHRVCLPEATQVFPPGEGVVVTGWGSLSYNGKSPLLLQKASIKIIDTNACNSEEAYGGRIMDTMLCAGYMEGYVDACQGDSGGPLVHPNSRDIWYLVGIVSWGHECGRVNKPGVYMRVTSYRDWIASKTGI.

Residues 1–19 lie on the Cytoplasmic side of the membrane; that stretch reads MTVSKLRPVIASRKSFPPW. A helical; Signal-anchor for type II membrane protein membrane pass occupies residues 20–40; the sequence is MIILGVLGVLAILGLIIGLLV. Topologically, residues 41–420 are extracellular; the sequence is HFLAVENKIY…RDWIASKTGI (380 aa). The region spanning 48 to 165 is the SEA domain; sequence KIYYYQGSFK…GSLKLTEITK (118 aa). Asparagine 111 and asparagine 146 each carry an N-linked (GlcNAc...) asparagine glycan. Residues 189–419 form the Peptidase S1 domain; the sequence is ITGGSTAQKG…YRDWIASKTG (231 aa). An intrachain disulfide couples cysteine 214 to cysteine 230. The Charge relay system role is filled by histidine 229. A glycan (N-linked (GlcNAc...) asparagine) is linked at asparagine 239. The active-site Charge relay system is the aspartate 274. 2 disulfide bridges follow: cysteine 339/cysteine 355 and cysteine 366/cysteine 395. The active-site Charge relay system is serine 370.

It belongs to the peptidase S1 family.

The protein localises to the membrane. The protein resides in the cell membrane. Its activity is regulated as follows. Inhibited by aprotinin, leupeptin, benzamidine, SERPINA1, SPINT1 and SPINT2. Serine protease. This is Transmembrane protease serine 11B-like protein (Tmprss11bnl) from Rattus norvegicus (Rat).